Reading from the N-terminus, the 602-residue chain is Sodium- and chloride-dependent GABA transporter 2 (602 aa).

At 1–40 the chain is on the cytoplasmic side; the sequence is MENRASGTTSNGETKPVCPAMEKVEEDGTLEREHWNNKME. Helical transmembrane passes span 41-61, 68-88, and 121-141; these read FVLS…FPYL, GAFF…VFFL, and IVSL…FYLF. The Extracellular segment spans residues 142–206; it reads SSFTTDLPWG…GIQHLGSLRW (65 aa). A disulfide bridge connects residues cysteine 153 and cysteine 162. Asparagine 169, asparagine 173, and asparagine 178 each carry an N-linked (GlcNAc...) asparagine glycan. A run of 2 helical transmembrane segments spans residues 207-227 and 233-253; these read ELVL…WKGV and VVYF…IRGV. An N-linked (GlcNAc...) asparagine glycan is attached at asparagine 269. 7 helical membrane passes run 282 to 302, 319 to 339, 366 to 386, 418 to 438, 453 to 473, 490 to 510, and 528 to 548; these read AGTQ…ALGS, ILNS…LGFM, VVML…VVLL, VLIL…LTEG, GMCL…VYGA, PLIK…TFLF, and WWGD…IPAW. Residues 549-602 are Cytoplasmic-facing; sequence SIYKLRTLKGPLRERLRQLVCPAEDLPQKNQPEPTAPATPMTSLLRLTELESNC. The residue at position 587 (threonine 587) is a Phosphothreonine. The residue at position 591 (serine 591) is a Phosphoserine.

This sequence belongs to the sodium:neurotransmitter symporter (SNF) (TC 2.A.22) family. SLC6A13 subfamily. In terms of tissue distribution, expressed at high levels in liver, followed by kidney and leptomeninges, and very low levels in the cerebellum (at protein level). In the brain, detected in some blood vessels (at protein level). In the kidney, expressed in the cortex, including parts of the proximal tubules, but not in the medulla (at protein level). In the liver, highest expression in periportal hepatocytes, with highest density at the vascular side (at protein level). Also detected at low levels in other organs, including skeletal muscle.

It is found in the cell membrane. Its subcellular location is the basolateral cell membrane. It catalyses the reaction 4-aminobutanoate(out) + chloride(out) + 2 Na(+)(out) = 4-aminobutanoate(in) + chloride(in) + 2 Na(+)(in). The catalysed reaction is taurine(out) + chloride(out) + 2 Na(+)(out) = taurine(in) + chloride(in) + 2 Na(+)(in). The enzyme catalyses beta-alanine(out) + chloride(out) + 2 Na(+)(out) = beta-alanine(in) + chloride(in) + 2 Na(+)(in). It carries out the reaction hypotaurine(out) + chloride(out) + 2 Na(+)(out) = hypotaurine(in) + chloride(in) + 2 Na(+)(in). Its activity is regulated as follows. Gamma-aminobutyric acid (GABA) transport is inhibited by beta-alanine, taurine, hypotaurine, beta-guanidinopropionic acid, 2,3-diaminopropionic acid, guvacine and nipecotic acid. Beta-alanine transport is inhibited by GABA. Taurine transport is inhibited by GABA, beta-alanine, SNAP-5114, nigericin, nipecotic acid and ouabain. Functionally, mediates sodium- and chloride-dependent transport of gamma-aminobutyric acid (GABA). Can also mediate transport of beta-alanine, taurine and hypotaurine and is the major taurine transporter in hepatocytes. The sequence is that of Sodium- and chloride-dependent GABA transporter 2 (Slc6a13) from Mus musculus (Mouse).